We begin with the raw amino-acid sequence, 536 residues long: Zinc finger protein 623 (536 aa).

A disordered region spans residues 57-77 (GELLGNPEGQSLGSSPSQDRG). The segment covering 64-74 (EGQSLGSSPSQ) has biased composition (polar residues). 13 consecutive C2H2-type zinc fingers follow at residues 123–145 (NPCD…RISH), 151–173 (YTCD…QRIH), 179–201 (YVCN…QRVH), 207–229 (FKCA…QRVH), 235–257 (FECK…QRIH), 263–285 (YECN…YQIH), 291–313 (YECK…QRIH), 319–341 (FECN…QRIH), 347–369 (YVCN…QRIH), 375–397 (YECN…QKIH), 403–425 (YECK…QKIH), 431–453 (FECK…QIIH), and 459–481 (YVCS…QKIH). Residue lysine 445 forms a Glycyl lysine isopeptide (Lys-Gly) (interchain with G-Cter in SUMO2) linkage. Positions 513 to 536 (LSLSKAPIHLGERSVDKGEHTGNL) are disordered. Positions 522–536 (LGERSVDKGEHTGNL) are enriched in basic and acidic residues.

The protein belongs to the krueppel C2H2-type zinc-finger protein family.

Its subcellular location is the nucleus. Functionally, may be involved in transcriptional regulation. The sequence is that of Zinc finger protein 623 (ZNF623) from Homo sapiens (Human).